The chain runs to 388 residues: MSDLAHTAVELCRELLRRPSVTPLDAGAQDFLAAKLREAGFATHSVVFSDESTPDIQNLYARAGAGGRHLVFAGHTDVVPPGDSASWRFDPFGGEMEGGLIFGRGAVDMKGAIAAFAAAAMAFVAEGGAQKGSISFLITGDEEGPAINGTDKLLRWAHQRGERFDHCILGEPTNQQALGDMIKIGRRGSLNGTLTVKGVQGHVAYPHRAKNPIPHLMRLLAALTAEPLDQGTELFDASNLEIVSVDVGNPTFNVIPAEARARFNIRFNDIWTPDALAAELRARAEKAGAAAGAASALHFEPCNALAFVTQPDAFTDLVSAAIEQATGRKPKLSTSGGTSDARFIRAYCPVLEFGLVGSTMHAVDERAPVEDISALASIYADILNSYFK.

His75 provides a ligand contact to Zn(2+). The active site involves Asp77. Asp108 contacts Zn(2+). The Proton acceptor role is filled by Glu142. Positions 143, 171, and 361 each coordinate Zn(2+).

This sequence belongs to the peptidase M20A family. DapE subfamily. As to quaternary structure, homodimer. It depends on Zn(2+) as a cofactor. Requires Co(2+) as cofactor.

It catalyses the reaction N-succinyl-(2S,6S)-2,6-diaminopimelate + H2O = (2S,6S)-2,6-diaminopimelate + succinate. It functions in the pathway amino-acid biosynthesis; L-lysine biosynthesis via DAP pathway; LL-2,6-diaminopimelate from (S)-tetrahydrodipicolinate (succinylase route): step 3/3. In terms of biological role, catalyzes the hydrolysis of N-succinyl-L,L-diaminopimelic acid (SDAP), forming succinate and LL-2,6-diaminopimelate (DAP), an intermediate involved in the bacterial biosynthesis of lysine and meso-diaminopimelic acid, an essential component of bacterial cell walls. The protein is Succinyl-diaminopimelate desuccinylase of Methylocella silvestris (strain DSM 15510 / CIP 108128 / LMG 27833 / NCIMB 13906 / BL2).